A 3165-amino-acid polypeptide reads, in one-letter code: Protein eyes shut homolog (3165 aa).

A signal peptide spans 1-21 (MTDKSIVILSLMVFHSSFING). An N-linked (GlcNAc...) asparagine glycan is attached at Asn166. EGF-like domains lie at 170–212 (KQQF…KYCQ), 213–254 (ELDA…KNCS), and 256–292 (IIGQ…PFCE). Cystine bridges form between Cys174-Cys189, Cys183-Cys200, Cys202-Cys211, Cys217-Cys228, Cys222-Cys242, Cys244-Cys253, Cys260-Cys270, Cys265-Cys280, and Cys282-Cys291. N-linked (GlcNAc...) asparagine glycosylation is found at Asn269 and Asn272. N-linked (GlcNAc...) asparagine glycans are attached at residues Asn311 and Asn343. 2 EGF-like domains span residues 332–368 (DVSE…LLCK) and 370–406 (IQTS…KNCE). 4 disulfides stabilise this stretch: Cys341/Cys356, Cys358/Cys367, Cys374/Cys385, and Cys396/Cys405. N-linked (GlcNAc...) asparagine glycosylation is found at Asn506 and Asn566. EGF-like domains are found at residues 567–602 (TTDD…RLCV) and 643–679 (DTED…TQCE). Disulfide bonds link Cys575-Cys590, Cys592-Cys601, Cys669-Cys678, Cys685-Cys696, Cys690-Cys705, Cys707-Cys719, Cys737-Cys748, Cys742-Cys757, Cys759-Cys768, Cys775-Cys786, Cys780-Cys795, Cys797-Cys806, Cys813-Cys824, Cys818-Cys835, Cys837-Cys846, Cys853-Cys866, Cys860-Cys876, Cys878-Cys887, Cys894-Cys905, Cys899-Cys914, Cys916-Cys925, Cys932-Cys943, Cys937-Cys952, Cys954-Cys963, Cys970-Cys981, Cys975-Cys990, Cys992-Cys1001, Cys1008-Cys1019, Cys1013-Cys1028, Cys1030-Cys1039, Cys1046-Cys1056, Cys1051-Cys1065, Cys1067-Cys1076, Cys1083-Cys1094, Cys1088-Cys1103, Cys1105-Cys1114, Cys1121-Cys1137, Cys1131-Cys1147, Cys1149-Cys1158, Cys1165-Cys1176, Cys1170-Cys1185, Cys1187-Cys1196, Cys2037-Cys2063, Cys2103-Cys2114, Cys2108-Cys2128, and Cys2130-Cys2139. The 40-residue stretch at 681-720 (DIDECASHPCKNGATCIDQPGNYFCQCVPPFKVVDGFSCL) folds into the EGF-like 8; calcium-binding domain. The 37-residue stretch at 733–769 (DIDDCILNACEHNSTCKDLHLSYQCVCLSDWEGNFCE) folds into the EGF-like 9; calcium-binding domain. One can recognise an EGF-like 10; calcium-binding domain in the interval 771–807 (ESNECKMNPCKNNSTCTDLYKSYRCECTSGWTGQNCS). 3 consecutive EGF-like domains span residues 809–847 (EINE…QFCH), 849–888 (RYNL…KNCE), and 890–926 (DVKD…SLCE). The EGF-like 14; calcium-binding domain maps to 928-964 (EINECSSEPCKNNGTCVDLTNRFFCNCEPEYHGPFCE). Residues 966–1002 (DVNKCKISPCLDEENCVYRTDGYNCLCAPGYTGINCE) form the EGF-like 15 domain. In terms of domain architecture, EGF-like 16; calcium-binding spans 1004 to 1040 (NLDECLSEPCLHDGVCIDGINHYTCDCKSGFFGTHCE). EGF-like domains are found at residues 1042-1077 (NAND…TQCK), 1079-1115 (KIND…AYCE), and 1117-1159 (SIDN…QFCE). The EGF-like 20; calcium-binding domain occupies 1161–1197 (NINECSSSPCLHGADCEDHINGYVCKCQPGWSGHHCE). Residues 1883–2063 (FSCVRYYGDS…AVKNYHINNC (181 aa)) form the Laminin G-like 1 domain. An EGF-like 21 domain is found at 2099–2140 (APSVCQQDVCHNGGTCHAIFLSSGIVSFQCDCPLHFTGRFCE). A Laminin G-like 2 domain is found at 2145–2339 (LFFPSFNGNS…NIENCHVPWC (195 aa)). N-linked (GlcNAc...) asparagine glycosylation is present at Asn2170. EGF-like domains lie at 2335-2368 (HVPW…YSGK) and 2371-2408 (QFAS…PLCT). Disulfide bonds link Cys2339–Cys2350, Cys2344–Cys2359, Cys2375–Cys2386, Cys2380–Cys2396, Cys2398–Cys2407, Cys2576–Cys2609, Cys2614–Cys2625, Cys2619–Cys2634, Cys2636–Cys2645, Cys2652–Cys2668, Cys2662–Cys2677, Cys2679–Cys2688, Cys2868–Cys2895, Cys2900–Cys2911, Cys2905–Cys2920, Cys2922–Cys2931, Cys2937–Cys2948, Cys2942–Cys2958, and Cys2960–Cys2969. The 191-residue stretch at 2419 to 2609 (SGTDAFGYTS…PNAGRSVGQC (191 aa)) folds into the Laminin G-like 3 domain. 2 EGF-like domains span residues 2610–2646 (HASP…SFCT) and 2648–2689 (TVST…IYCE). The region spanning 2717 to 2895 (DPSFRSNELS…AKGGSNVGDC (179 aa)) is the Laminin G-like 4 domain. 2 consecutive EGF-like domains span residues 2896–2932 (DGTA…NTCN) and 2933–2970 (QSVS…RYCE). Positions 2975–3165 (FSTAKFMGNS…YDGDEQNEVT (191 aa)) constitute a Laminin G-like 5 domain.

Belongs to the EYS family. Expressed in retina (at protein level). Isoform 1: Detected in retina. Isoform 2: Detected in retina. Isoform 3: Strongly expressed in retina and testis. Isoform 4: Strongly expressed in testis, and weakly expressed in retina.

It localises to the cell projection. Its subcellular location is the cilium. The protein resides in the photoreceptor outer segment. The protein localises to the cytoplasm. It is found in the cytoskeleton. It localises to the cilium axoneme. Its subcellular location is the microtubule organizing center. The protein resides in the centrosome. The protein localises to the secreted. It is found in the extracellular space. It localises to the extracellular matrix. Its subcellular location is the interphotoreceptor matrix. Its function is as follows. Required to maintain the integrity of photoreceptor cells. Specifically required for normal morphology of the photoreceptor ciliary pocket, and might thus facilitate protein trafficking between the photoreceptor inner and outer segments via the transition zone. The chain is Protein eyes shut homolog (EYS) from Homo sapiens (Human).